A 518-amino-acid polypeptide reads, in one-letter code: Ribonuclease Y (518 aa).

The chain crosses the membrane as a helical span at residues 2–22; the sequence is GSIIISALLALVIGAVVGFFV. The region spanning 208–271 is the KH domain; sequence TVSVVNLPND…ETARIALDKL (64 aa). Positions 334–427 constitute an HD domain; it reads VLKHSVEVAF…VAAADALSAA (94 aa).

The protein belongs to the RNase Y family.

It is found in the cell membrane. Its function is as follows. Endoribonuclease that initiates mRNA decay. This is Ribonuclease Y from Geobacillus kaustophilus (strain HTA426).